A 228-amino-acid chain; its full sequence is HTH-type transcriptional regulator ArcR (228 aa).

An a nucleoside 3',5'-cyclic phosphate-binding site is contributed by 22 to 141 (SYINIPVGVL…VKLFSLLSET (120 aa)). Residues 155–228 (KLAKERVTKI…SKNWLVSKDL (74 aa)) form the HTH crp-type domain. Residues 188 to 207 (IQLLSDMAGISRETTSHIIN) constitute a DNA-binding region (H-T-H motif).

Its subcellular location is the cytoplasm. Positively regulates the expression of the arcABDCR operon under anaerobic conditions, thus playing an essential role in arginine catabolism. May also control the expression of genes encoding proteins which are involved in anaerobic metabolism. Can bind cyclic AMP. The chain is HTH-type transcriptional regulator ArcR (arcR) from Staphylococcus epidermidis (strain ATCC 35984 / DSM 28319 / BCRC 17069 / CCUG 31568 / BM 3577 / RP62A).